The chain runs to 562 residues: Potassium-transporting ATPase potassium-binding subunit (562 aa).

12 consecutive transmembrane segments (helical) span residues G5–G25, A65–F85, I135–F155, L181–T201, I257–F277, L283–Y303, F331–V351, L358–G378, V381–V401, A422–P442, I486–I506, and F528–P548.

The protein belongs to the KdpA family. As to quaternary structure, the system is composed of three essential subunits: KdpA, KdpB and KdpC.

It localises to the cell membrane. Its function is as follows. Part of the high-affinity ATP-driven potassium transport (or Kdp) system, which catalyzes the hydrolysis of ATP coupled with the electrogenic transport of potassium into the cytoplasm. This subunit binds the extracellular potassium ions and delivers the ions to the membrane domain of KdpB through an intramembrane tunnel. This chain is Potassium-transporting ATPase potassium-binding subunit, found in Alicyclobacillus acidocaldarius subsp. acidocaldarius (strain ATCC 27009 / DSM 446 / BCRC 14685 / JCM 5260 / KCTC 1825 / NBRC 15652 / NCIMB 11725 / NRRL B-14509 / 104-IA) (Bacillus acidocaldarius).